Here is a 198-residue protein sequence, read N- to C-terminus: Protein GrpE (198 aa).

A disordered region spans residues 1 to 58; it reads MTEKDQSVNNEEFAEKEDNTAKDSNTDEQIEKTASEDDVQNDSSAVDDKEKEIQQLKE. 2 stretches are compositionally biased toward basic and acidic residues: residues 16-35 and 46-58; these read KEDN…KTAS and VDDK…QLKE.

The protein belongs to the GrpE family. In terms of assembly, homodimer.

It is found in the cytoplasm. Participates actively in the response to hyperosmotic and heat shock by preventing the aggregation of stress-denatured proteins, in association with DnaK and GrpE. It is the nucleotide exchange factor for DnaK and may function as a thermosensor. Unfolded proteins bind initially to DnaJ; upon interaction with the DnaJ-bound protein, DnaK hydrolyzes its bound ATP, resulting in the formation of a stable complex. GrpE releases ADP from DnaK; ATP binding to DnaK triggers the release of the substrate protein, thus completing the reaction cycle. Several rounds of ATP-dependent interactions between DnaJ, DnaK and GrpE are required for fully efficient folding. In Staphylococcus carnosus (strain TM300), this protein is Protein GrpE.